Consider the following 423-residue polypeptide: Serine hydroxymethyltransferase (423 aa).

(6S)-5,6,7,8-tetrahydrofolate contacts are provided by residues Leu118 and 122 to 124 (GHL). An N6-(pyridoxal phosphate)lysine modification is found at Lys227. 351-353 (SPF) contributes to the (6S)-5,6,7,8-tetrahydrofolate binding site.

Belongs to the SHMT family. As to quaternary structure, homodimer. Requires pyridoxal 5'-phosphate as cofactor.

The protein localises to the cytoplasm. It catalyses the reaction (6R)-5,10-methylene-5,6,7,8-tetrahydrofolate + glycine + H2O = (6S)-5,6,7,8-tetrahydrofolate + L-serine. It participates in one-carbon metabolism; tetrahydrofolate interconversion. The protein operates within amino-acid biosynthesis; glycine biosynthesis; glycine from L-serine: step 1/1. Functionally, catalyzes the reversible interconversion of serine and glycine with tetrahydrofolate (THF) serving as the one-carbon carrier. This reaction serves as the major source of one-carbon groups required for the biosynthesis of purines, thymidylate, methionine, and other important biomolecules. Also exhibits THF-independent aldolase activity toward beta-hydroxyamino acids, producing glycine and aldehydes, via a retro-aldol mechanism. This is Serine hydroxymethyltransferase from Petrotoga mobilis (strain DSM 10674 / SJ95).